We begin with the raw amino-acid sequence, 174 residues long: Shikimate kinase 2 (174 aa).

12–17 (GAGKTT) is an ATP binding site. Mg(2+) contacts are provided by Thr16 and Asp32. 3 residues coordinate substrate: Asp34, Arg58, and Gly79. The segment at 112-126 (AEDPEDAQRPSLTGK) is LID domain. Residue Arg120 participates in ATP binding. Residue Arg139 coordinates substrate. Gln155 lines the ATP pocket.

It belongs to the shikimate kinase family. AroL subfamily. As to quaternary structure, monomer. The cofactor is Mg(2+).

It is found in the cytoplasm. It catalyses the reaction shikimate + ATP = 3-phosphoshikimate + ADP + H(+). It participates in metabolic intermediate biosynthesis; chorismate biosynthesis; chorismate from D-erythrose 4-phosphate and phosphoenolpyruvate: step 5/7. In terms of biological role, catalyzes the specific phosphorylation of the 3-hydroxyl group of shikimic acid using ATP as a cosubstrate. This chain is Shikimate kinase 2, found in Yersinia enterocolitica serotype O:8 / biotype 1B (strain NCTC 13174 / 8081).